A 503-amino-acid chain; its full sequence is Aromatase (503 aa).

Transmembrane regions (helical) follow at residues Glu19–Trp39, Phe53–Ala73, and Met303–Ala323. Residues Asp309 and Met374 each coordinate substrate. Residue Cys437 coordinates heme.

Belongs to the cytochrome P450 family. It depends on heme as a cofactor.

The protein resides in the endoplasmic reticulum membrane. The protein localises to the microsome membrane. It catalyses the reaction testosterone + 3 reduced [NADPH--hemoprotein reductase] + 3 O2 = 17beta-estradiol + formate + 3 oxidized [NADPH--hemoprotein reductase] + 4 H2O + 4 H(+). The catalysed reaction is androst-4-ene-3,17-dione + 3 reduced [NADPH--hemoprotein reductase] + 3 O2 = estrone + formate + 3 oxidized [NADPH--hemoprotein reductase] + 4 H2O + 4 H(+). It carries out the reaction androst-4-ene-3,17-dione + reduced [NADPH--hemoprotein reductase] + O2 = 19-hydroxyandrost-4-ene-3,17-dione + oxidized [NADPH--hemoprotein reductase] + H2O + H(+). The enzyme catalyses 19-hydroxyandrost-4-ene-3,17-dione + reduced [NADPH--hemoprotein reductase] + O2 = 19-oxo-androst-4-ene-3,17-dione + oxidized [NADPH--hemoprotein reductase] + 2 H2O + H(+). It catalyses the reaction 19-oxo-androst-4-ene-3,17-dione + reduced [NADPH--hemoprotein reductase] + O2 = estrone + formate + oxidized [NADPH--hemoprotein reductase] + H2O + 2 H(+). The catalysed reaction is estrone + reduced [NADPH--hemoprotein reductase] + O2 = 2-hydroxyestrone + oxidized [NADPH--hemoprotein reductase] + H2O + H(+). It carries out the reaction 17beta-hydroxy-5alpha-androstan-3-one + reduced [NADPH--hemoprotein reductase] + O2 = 17beta,19-dihydroxy-3-oxo-5alpha-androstanone + oxidized [NADPH--hemoprotein reductase] + H2O + H(+). The enzyme catalyses 17beta,19-dihydroxy-3-oxo-5alpha-androstanone + reduced [NADPH--hemoprotein reductase] + O2 = 17beta-hydroxy-3,19-dioxo-5alpha-androstanone + oxidized [NADPH--hemoprotein reductase] + 2 H2O + H(+). It catalyses the reaction 17beta-hydroxy-3,19-dioxo-5alpha-androstanone + reduced [NADPH--hemoprotein reductase] + O2 = 17beta-hydroxy-3-oxo-19-nor-5alpha-androst-1-ene + formate + oxidized [NADPH--hemoprotein reductase] + H2O + 2 H(+). Its pathway is steroid hormone biosynthesis. In terms of biological role, a cytochrome P450 monooxygenase that catalyzes the conversion of C19 androgens, androst-4-ene-3,17-dione (androstenedione) and testosterone to the C18 estrogens, estrone and estradiol, respectively. Catalyzes three successive oxidations of C19 androgens: two conventional oxidations at C19 yielding 19-hydroxy and 19-oxo/19-aldehyde derivatives, followed by a third oxidative aromatization step that involves C1-beta hydrogen abstraction combined with cleavage of the C10-C19 bond to yield a phenolic A ring and formic acid. Alternatively, the third oxidative reaction yields a 19-norsteroid and formic acid. Converts dihydrotestosterone to delta1,10-dehydro 19-nordihydrotestosterone and may play a role in homeostasis of this potent androgen. Also displays 2-hydroxylase activity toward estrone. Mechanistically, uses molecular oxygen inserting one oxygen atom into a substrate, and reducing the second into a water molecule, with two electrons provided by NADPH via cytochrome P450 reductase (CPR; NADPH-ferrihemoprotein reductase). This Capra hircus (Goat) protein is Aromatase (CYP19A1).